The sequence spans 459 residues: Biphenyl dioxygenase subunit alpha (459 aa).

Residues 58–156 (WLLLGHESHV…KEGDCGFDKA (99 aa)) enclose the Rieske domain. Residues Cys-100, His-102, Cys-120, and His-123 each coordinate [2Fe-2S] cluster. Fe cation-binding residues include His-233 and His-239.

Belongs to the bacterial ring-hydroxylating dioxygenase alpha subunit family. As to quaternary structure, heterohexamer consisting of three BphA subunits and three BphE subunits. A ferredoxin (BphF) and a ferredoxin reductase (BphG) must be present to obtain activity. Requires [2Fe-2S] cluster as cofactor. The cofactor is Fe cation.

The catalysed reaction is biphenyl + NADH + O2 + H(+) = (2R,3S)-3-phenylcyclohexa-3,5-diene-1,2-diol + NAD(+). Its pathway is xenobiotic degradation; biphenyl degradation; 2-hydroxy-2,4-pentadienoate and benzoate from biphenyl: step 1/4. The polypeptide is Biphenyl dioxygenase subunit alpha (bphA) (Paraburkholderia xenovorans (strain LB400)).